The following is a 651-amino-acid chain: Acetyl-coenzyme A synthetase 1 (651 aa).

Residues 191 to 194, threonine 311, and asparagine 335 each bind CoA; that span reads RGGK. ATP contacts are provided by residues 387–389, 411–416, aspartate 500, and arginine 515; these read GEP and DTWWQT. Serine 523 is a CoA binding site. Arginine 526 is an ATP binding site. The Mg(2+) site is built by valine 537, histidine 539, and valine 542. Residue arginine 584 coordinates CoA. Lysine 609 carries the post-translational modification N6-acetyllysine.

The protein belongs to the ATP-dependent AMP-binding enzyme family. Mg(2+) serves as cofactor. In terms of processing, acetylated. Deacetylation by the SIR2-homolog deacetylase activates the enzyme.

It carries out the reaction acetate + ATP + CoA = acetyl-CoA + AMP + diphosphate. Functionally, catalyzes the conversion of acetate into acetyl-CoA (AcCoA), an essential intermediate at the junction of anabolic and catabolic pathways. AcsA undergoes a two-step reaction. In the first half reaction, AcsA combines acetate with ATP to form acetyl-adenylate (AcAMP) intermediate. In the second half reaction, it can then transfer the acetyl group from AcAMP to the sulfhydryl group of CoA, forming the product AcCoA. The polypeptide is Acetyl-coenzyme A synthetase 1 (Pseudomonas aeruginosa (strain ATCC 15692 / DSM 22644 / CIP 104116 / JCM 14847 / LMG 12228 / 1C / PRS 101 / PAO1)).